A 301-amino-acid chain; its full sequence is Sulfate adenylyltransferase subunit 2 (301 aa).

The protein belongs to the PAPS reductase family. CysD subfamily. Heterodimer composed of CysD, the smaller subunit, and CysN.

The catalysed reaction is sulfate + ATP + H(+) = adenosine 5'-phosphosulfate + diphosphate. It participates in sulfur metabolism; hydrogen sulfide biosynthesis; sulfite from sulfate: step 1/3. Functionally, with CysN forms the ATP sulfurylase (ATPS) that catalyzes the adenylation of sulfate producing adenosine 5'-phosphosulfate (APS) and diphosphate, the first enzymatic step in sulfur assimilation pathway. APS synthesis involves the formation of a high-energy phosphoric-sulfuric acid anhydride bond driven by GTP hydrolysis by CysN coupled to ATP hydrolysis by CysD. In Trichlorobacter lovleyi (strain ATCC BAA-1151 / DSM 17278 / SZ) (Geobacter lovleyi), this protein is Sulfate adenylyltransferase subunit 2.